The primary structure comprises 352 residues: Geranylgeranyl transferase type-1 subunit beta (352 aa).

4 PFTB repeats span residues 135 to 180 (VNKK…FILD), 187 to 228 (KESA…SLLG), 236 to 276 (FKEQ…MMID), and 283 to 325 (FASI…SFGN). Residues 213 to 215 (HGG) and 255 to 258 (RTNK) each bind geranylgeranyl diphosphate. Positions 261 and 263 each coordinate Zn(2+). 264-267 (YAFW) lines the geranylgeranyl diphosphate pocket. H313 contacts Zn(2+).

Belongs to the protein prenyltransferase subunit beta family. In terms of assembly, heterodimer of an alpha and a beta subunit. Zn(2+) serves as cofactor. It depends on Mg(2+) as a cofactor.

It carries out the reaction geranylgeranyl diphosphate + L-cysteinyl-[protein] = S-geranylgeranyl-L-cysteinyl-[protein] + diphosphate. In terms of biological role, catalyzes the transfer of a geranyl-geranyl moiety from geranyl-geranyl pyrophosphate to a cysteine at the fourth position from the C-terminus of proteins having the C-terminal sequence Cys-aliphatic-aliphatic-X. The sequence is that of Geranylgeranyl transferase type-1 subunit beta (pggt1b) from Dictyostelium discoideum (Social amoeba).